We begin with the raw amino-acid sequence, 314 residues long: MKKKIAEYEVGEQVDIFLLIKTATKGIASNGKPFLTVILQDPSGDIEAKLWDVSPEVEKQYVAETIVKVAGDILNYKGRIQLRVKQIRVANENEVTDISDFVEKAPVKKEDMVEKITQYIFEMRNPNIQRLTRHLLNKHQTEFLDYPAATKNHHEFVSGLAYHVVSMLDLAKAISNLYPSLDKDLLYAGVILHDLGKVIELSGPISTTYTLEGNLLGHISIMVNEIGKAADELQIDAEEVLILQHIVLSHHGKAEWGSPKPPLVKEAEILHYIDNLDAKMNMMDRALGRTKPGEYTERVFALDNRSFYKPSFHN.

The 117-residue stretch at His-163–Lys-279 folds into the HD domain.

Belongs to the YhaM family.

Its function is as follows. Shows a 3'-5' exoribonuclease activity. In Bacillus cereus (strain AH187), this protein is 3'-5' exoribonuclease YhaM.